The chain runs to 946 residues: Zinc finger CCCH-type antiviral protein 1 (946 aa).

An N-terminal domain region spans residues Met1–His254. Positions Arg69–Lys76 match the Nuclear localization signal motif. 4 consecutive C3H1-type zinc fingers follow at residues Cys73–His86, Leu87–Leu113, Cys150–His172, and Ile173–Met194. Disordered stretches follow at residues Asn221 to Leu283 and Arg302 to Phe354. A binding to EXOSC5 region spans residues Thr224–His254. Residues Ala242–Ser257 are compositionally biased toward basic and acidic residues. Ser257 carries the phosphoserine modification. Ser262 carries the post-translational modification Phosphoserine; by GSK3-beta. Phosphoserine is present on residues Ser265, Ser269, and Ser273. Thr277 bears the Phosphothreonine mark. Positions Leu283 to Val290 match the Nuclear export signal motif. Phosphoserine occurs at positions 324 and 350. The Nuclear localization signal motif lies at Lys412–Arg413. Residue Ser425 is modified to Phosphoserine. The interval Asn461–Pro491 is disordered. The span at Gly466–Ser477 shows a compositional bias: polar residues. Tyr508 bears the Phosphotyrosine mark. Positions Gly523–Ser570 are disordered. Residues Glu524 to Asn533 show a composition bias toward polar residues. The residue at position 553 (Ser553) is a Phosphoserine. Over residues Pro554–Ser567 the composition is skewed to polar residues. 2 positions are modified to phosphoserine: Ser583 and Ser680. One can recognise a WWE domain in the interval Phe684–Arg771. Positions Ser805–Lys946 constitute a PARP catalytic domain.

This sequence belongs to the ARTD/PARP family. Homodimer or homooligomer. Homooligomerization is essential for its antiviral activity. Interacts with EXOSC5. Interacts (via N-terminal domain) with DDX17 in an RNA-independent manner. Interacts with EXOSC3, EXOSC7, DCP2 and DCP1A. Interacts with PARN in an RNA-independent manner. Interacts with XRN1 in an RNA-dependent manner. Interacts (via N-terminal domain) with DHX30 (via N-terminus) in an RNA-independent manner. Isoform 2 interacts (via zinc-fingers) with RIGI in an RNA-dependent manner. In terms of processing, phosphorylation at Ser-273 is essential for sequential phosphorylation of Ser-269, Ser-265, Ser-262 and Ser-257 by GSK3-beta. Phosphorylation by GSK3-beta enhances its antiviral activity.

Its subcellular location is the cytoplasm. The protein localises to the nucleus. Its function is as follows. Antiviral protein which inhibits the replication of viruses by recruiting the cellular RNA degradation machineries to degrade the viral mRNAs. Binds to a ZAP-responsive element (ZRE) present in the target viral mRNA, recruits cellular poly(A)-specific ribonuclease PARN to remove the poly(A) tail, and the 3'-5' exoribonuclease complex exosome to degrade the RNA body from the 3'-end. It also recruits the decapping complex DCP1-DCP2 through RNA helicase p72 (DDX17) to remove the cap structure of the viral mRNA to initiate its degradation from the 5'-end. Its target viruses belong to families which include retroviridae: human immunodeficiency virus type 1 (HIV-1) and moloney and murine leukemia virus (MoMLV), filoviridae: ebola virus (EBOV) and marburg virus (MARV), togaviridae: sindbis virus (SINV) and Ross river virus (RRV). Specifically targets the multiply spliced but not unspliced or singly spliced HIV-1 mRNAs for degradation. Isoform 1 is a more potent viral inhibitor than isoform 2. Isoform 2 acts as a positive regulator of RIG-I signaling resulting in activation of the downstream effector IRF3 leading to the expression of type I IFNs and IFN stimulated genes (ISGs). This chain is Zinc finger CCCH-type antiviral protein 1 (Zc3hav1), found in Mus musculus (Mouse).